Consider the following 103-residue polypeptide: Large ribosomal subunit protein bL21 (103 aa).

This sequence belongs to the bacterial ribosomal protein bL21 family. As to quaternary structure, part of the 50S ribosomal subunit. Contacts protein L20.

Its function is as follows. This protein binds to 23S rRNA in the presence of protein L20. The chain is Large ribosomal subunit protein bL21 from Caldicellulosiruptor saccharolyticus (strain ATCC 43494 / DSM 8903 / Tp8T 6331).